A 563-amino-acid polypeptide reads, in one-letter code: Eukaryotic translation initiation factor 3 subunit D-1 (563 aa).

Residues 98 to 136 form a disordered region; that stretch reads VQKPPHQRGRFRNMRGRGGRGRNPRGGLNNHHHHGMTTL. Basic residues predominate over residues 100–120; it reads KPPHQRGRFRNMRGRGGRGRN. The tract at residues 291–305 is RNA gate; the sequence is EFDLLTVNESSVEPP.

It belongs to the eIF-3 subunit D family. In terms of assembly, component of the eukaryotic translation initiation factor 3 (eIF-3) complex. The eIF-3 complex interacts with pix.

The protein resides in the cytoplasm. Functionally, mRNA cap-binding component of the eukaryotic translation initiation factor 3 (eIF-3) complex, which is involved in protein synthesis of a specialized repertoire of mRNAs and, together with other initiation factors, stimulates binding of mRNA and methionyl-tRNAi to the 40S ribosome. The eIF-3 complex specifically targets and initiates translation of a subset of mRNAs involved in cell proliferation. In the eIF-3 complex, eif3d specifically recognizes and binds the 7-methylguanosine cap of a subset of mRNAs. The protein is Eukaryotic translation initiation factor 3 subunit D-1 of Drosophila pseudoobscura pseudoobscura (Fruit fly).